Here is a 170-residue protein sequence, read N- to C-terminus: Large ribosomal subunit protein bL9 (170 aa).

The tract at residues 149-170 is disordered; it reads DGDNEDLDEDNAADENEDYSEE.

The protein belongs to the bacterial ribosomal protein bL9 family.

Its function is as follows. Binds to the 23S rRNA. This Psychrobacter cryohalolentis (strain ATCC BAA-1226 / DSM 17306 / VKM B-2378 / K5) protein is Large ribosomal subunit protein bL9.